The sequence spans 330 residues: DNA-directed RNA polymerase I subunit RPA43 (330 aa).

The segment at 251-330 is disordered; the sequence is ADVTDVTPQE…ANFESPKKRQ (80 aa). Serine 306, serine 318, and serine 325 each carry phosphoserine. A compositionally biased stretch (basic and acidic residues) spans 317–330; the sequence is HSEEANFESPKKRQ.

Belongs to the eukaryotic RPA43 RNA polymerase subunit family. As to quaternary structure, component of the RNA polymerase I (Pol I) complex consisting of 13 subunits: a ten-subunit catalytic core composed of POLR1A/RPA1, POLR1B/RPA2, POLR1C/RPAC1, POLR1D/RPAC2, POLR1H/RPA12, POLR2E/RPABC1, POLR2F/RPABC2, POLR2H/RPABC3, POLR2K/RPABC4 and POLR2L/RPABC5; a mobile stalk subunit POLR1F/RPA43 protruding from the core and additional subunits homologous to general transcription factors POLR1E/RPA49 and POLR1G/RPA34. Interacts with RRN3/TIF-IA. Interacts with RRN3/TIF-IA. As to expression, widely expressed.

Its subcellular location is the nucleus. The protein localises to the nucleolus. In terms of biological role, component of RNA polymerase I (Pol I), a DNA-dependent RNA polymerase which synthesizes ribosomal RNA precursors using the four ribonucleoside triphosphates as substrates. Through its association with RRN3/TIF-IA may be involved in recruitment of Pol I to rDNA promoters. This is DNA-directed RNA polymerase I subunit RPA43 from Mus musculus (Mouse).